Consider the following 213-residue polypeptide: GrpE protein homolog, mitochondrial (213 aa).

Positions 35-55 are disordered; it reads STEKQPEEATEQKATESSPEV. Over residues 38–55 the composition is skewed to basic and acidic residues; it reads KQPEEATEQKATESSPEV.

It belongs to the GrpE family. Probable component of the PAM complex at least composed of a mitochondrial HSP70 protein, Roe1, TIM44, blp/TIM16 and TIM14.

It is found in the mitochondrion matrix. In terms of biological role, essential component of the PAM complex, a complex required for the translocation of transit peptide-containing proteins from the inner membrane into the mitochondrial matrix in an ATP-dependent manner. Seems to control the nucleotide-dependent binding of mitochondrial HSP70 to substrate proteins. This Drosophila melanogaster (Fruit fly) protein is GrpE protein homolog, mitochondrial (Roe1).